Reading from the N-terminus, the 244-residue chain is Small ribosomal subunit protein uS3 (244 aa).

Positions 39 to 107 (VREMLRKKLA…PAHINVTEVR (69 aa)) constitute a KH type-2 domain. Residues 213 to 244 (VGQEKQDDSPRNDRNDRGDRGDRPSRPAREAR) form a disordered region. Over residues 216–244 (EKQDDSPRNDRNDRGDRGDRPSRPAREAR) the composition is skewed to basic and acidic residues.

It belongs to the universal ribosomal protein uS3 family. Part of the 30S ribosomal subunit. Forms a tight complex with proteins S10 and S14.

In terms of biological role, binds the lower part of the 30S subunit head. Binds mRNA in the 70S ribosome, positioning it for translation. This chain is Small ribosomal subunit protein uS3, found in Xanthomonas euvesicatoria pv. vesicatoria (strain 85-10) (Xanthomonas campestris pv. vesicatoria).